A 229-amino-acid polypeptide reads, in one-letter code: MLDRDGFRPNVGIILLNQRNQVFWGKRIRTHSWQFPQGGIDRGETPEQAMFRELHEEVGLLPPQVRVIARTRDWLRYEVPDRFIRRDARGHYKGQKQIWYLLQLLGHDWDLNLRATNHPEFDAWRWNDYWVPLDVVVEFKRGVYEMALTELARFLPRHEQRNRYLRSGMRTREHESSGQASLARTSSLLVKPGMELPPGASFDPDPQNSVPAPLEALPTLPVPKKPLDA.

A Nudix hydrolase domain is found at 6 to 149 (GFRPNVGIIL…KRGVYEMALT (144 aa)). The Nudix box signature appears at 38–59 (GGIDRGETPEQAMFRELHEEVG). The tract at residues 191 to 229 (KPGMELPPGASFDPDPQNSVPAPLEALPTLPVPKKPLDA) is disordered. A compositionally biased stretch (pro residues) spans 220–229 (LPVPKKPLDA).

It belongs to the Nudix hydrolase family. RppH subfamily. A divalent metal cation is required as a cofactor.

Accelerates the degradation of transcripts by removing pyrophosphate from the 5'-end of triphosphorylated RNA, leading to a more labile monophosphorylated state that can stimulate subsequent ribonuclease cleavage. In Acidovorax ebreus (strain TPSY) (Diaphorobacter sp. (strain TPSY)), this protein is RNA pyrophosphohydrolase.